A 404-amino-acid chain; its full sequence is Cysteine desulfurase IscS (404 aa).

Pyridoxal 5'-phosphate-binding positions include A75–T76, N155, Q183, and S203–H205. N6-(pyridoxal phosphate)lysine is present on K206. T243 provides a ligand contact to pyridoxal 5'-phosphate. C328 acts as the Cysteine persulfide intermediate in catalysis. C328 provides a ligand contact to [2Fe-2S] cluster.

It belongs to the class-V pyridoxal-phosphate-dependent aminotransferase family. NifS/IscS subfamily. In terms of assembly, homodimer. Forms a heterotetramer with IscU, interacts with other sulfur acceptors. The cofactor is pyridoxal 5'-phosphate.

The protein resides in the cytoplasm. It catalyses the reaction (sulfur carrier)-H + L-cysteine = (sulfur carrier)-SH + L-alanine. The protein operates within cofactor biosynthesis; iron-sulfur cluster biosynthesis. In terms of biological role, master enzyme that delivers sulfur to a number of partners involved in Fe-S cluster assembly, tRNA modification or cofactor biosynthesis. Catalyzes the removal of elemental sulfur atoms from cysteine to produce alanine. Functions as a sulfur delivery protein for Fe-S cluster synthesis onto IscU, an Fe-S scaffold assembly protein, as well as other S acceptor proteins. This is Cysteine desulfurase IscS from Vibrio cholerae serotype O1 (strain M66-2).